We begin with the raw amino-acid sequence, 152 residues long: Endoribonuclease YbeY (152 aa).

Zn(2+) contacts are provided by histidine 114, histidine 118, and histidine 124.

The protein belongs to the endoribonuclease YbeY family. Requires Zn(2+) as cofactor.

It localises to the cytoplasm. Its function is as follows. Single strand-specific metallo-endoribonuclease involved in late-stage 70S ribosome quality control and in maturation of the 3' terminus of the 16S rRNA. The chain is Endoribonuclease YbeY from Wigglesworthia glossinidia brevipalpis.